A 408-amino-acid polypeptide reads, in one-letter code: Elongation factor Tu, chloroplastic (408 aa).

A tr-type G domain is found at Lys-10 to Lys-214. The G1 stretch occupies residues Gly-19 to Thr-26. A GTP-binding site is contributed by Gly-19 to Thr-26. A Mg(2+)-binding site is contributed by Thr-26. Positions Gly-60–Asn-64 are G2. The G3 stretch occupies residues Asp-81 to Gly-84. GTP-binding positions include Asp-81–His-85 and Asn-136–Asp-139. Positions Asn-136–Asp-139 are G4. Residues Ser-174–Leu-176 are G5.

This sequence belongs to the TRAFAC class translation factor GTPase superfamily. Classic translation factor GTPase family. EF-Tu/EF-1A subfamily.

It localises to the plastid. The protein resides in the chloroplast. It carries out the reaction GTP + H2O = GDP + phosphate + H(+). Its function is as follows. GTP hydrolase that promotes the GTP-dependent binding of aminoacyl-tRNA to the A-site of ribosomes during protein biosynthesis. In Chara connivens (Convergent stonewort), this protein is Elongation factor Tu, chloroplastic (tufA).